The following is a 307-amino-acid chain: Elongation factor Ts (307 aa).

The tract at residues 80-83 (TDFV) is involved in Mg(2+) ion dislocation from EF-Tu.

Belongs to the EF-Ts family.

Its subcellular location is the cytoplasm. Functionally, associates with the EF-Tu.GDP complex and induces the exchange of GDP to GTP. It remains bound to the aminoacyl-tRNA.EF-Tu.GTP complex up to the GTP hydrolysis stage on the ribosome. In Rhodopseudomonas palustris (strain BisA53), this protein is Elongation factor Ts.